Here is a 238-residue protein sequence, read N- to C-terminus: Uridylate kinase (238 aa).

12 to 15 (KLSG) contributes to the ATP binding site. G54 is a UMP binding site. G55 and R59 together coordinate ATP. UMP contacts are provided by residues D74 and 135 to 142 (TGNPFFTT). ATP-binding residues include T162, Y168, and D171.

It belongs to the UMP kinase family. In terms of assembly, homohexamer.

It localises to the cytoplasm. The enzyme catalyses UMP + ATP = UDP + ADP. It participates in pyrimidine metabolism; CTP biosynthesis via de novo pathway; UDP from UMP (UMPK route): step 1/1. Inhibited by UTP. In terms of biological role, catalyzes the reversible phosphorylation of UMP to UDP. This chain is Uridylate kinase, found in Methylobacillus flagellatus (strain ATCC 51484 / DSM 6875 / VKM B-1610 / KT).